The following is a 377-amino-acid chain: 6-oxocyclohex-1-ene-1-carbonyl-CoA hydrolase (377 aa).

This sequence belongs to the enoyl-CoA hydratase/isomerase family. In terms of assembly, homotetramer.

The catalysed reaction is 6-oxocyclohex-1-ene-1-carbonyl-CoA + 2 H2O = 3-hydroxy-6-carboxyhexanoyl-CoA + H(+). Its pathway is aromatic compound metabolism; benzoyl-CoA degradation. Functionally, involved in the central benzoyl-CoA catabolism. Catalyzes the addition of one molecule of water to the double bond and the hydrolytic cleavage of C-C bond in the alicyclic ring, 6-oxocyclohex-1-ene-1-carbonyl-CoA (6-OCH-CoA) to yield 3-hydroxypimelyl-CoA. This chain is 6-oxocyclohex-1-ene-1-carbonyl-CoA hydrolase (oah), found in Thauera aromatica.